The chain runs to 92 residues: Small ribosomal subunit protein uS19 (92 aa).

This sequence belongs to the universal ribosomal protein uS19 family.

In terms of biological role, protein S19 forms a complex with S13 that binds strongly to the 16S ribosomal RNA. The sequence is that of Small ribosomal subunit protein uS19 from Orientia tsutsugamushi (strain Boryong) (Rickettsia tsutsugamushi).